The primary structure comprises 145 residues: Protein phosphatase 1 regulatory subunit 14D (145 aa).

The span at 1 to 14 (MLSSSPASCTSPSP) shows a compositional bias: low complexity. A disordered region spans residues 1–59 (MLSSSPASCTSPSPDGENPCKKVHWASGRRRTSSTDSESKSHPDSSKIPRSRRPSRLTV). The interaction with protein phosphatase 1 stretch occupies residues 21–25 (KKVHW). The segment covering 21–32 (KKVHWASGRRRT) has biased composition (basic residues). Basic and acidic residues predominate over residues 37–47 (SESKSHPDSSK). Thr58 is modified (phosphothreonine).

This sequence belongs to the PP1 inhibitor family. In terms of processing, phosphorylated on several residues. Detected in colon, intestine, kidney and brain cortex.

It is found in the cytoplasm. Inhibitor of PPP1CA. Has inhibitory activity only when phosphorylated, creating a molecular switch for regulating the phosphorylation status of PPP1CA substrates and smooth muscle contraction. The protein is Protein phosphatase 1 regulatory subunit 14D (PPP1R14D) of Homo sapiens (Human).